The sequence spans 314 residues: MPRKIILDCDPGIDDAVAIFLAHGNPEIELLAITTVVGNQSLEKVTQNARLVADVAGIVGVPVAAGCTKPLVRGVRNASHIHGETGMGNVSYPPEFKTKLDGRHAVQLIIDLIMSHEPKTITLVPTGGLTNIAMAVRLEPRIVDRVKEVVLMGGGYHTGNASPVAEFNVFIDPEAAHIVFNESWNVTMVGLDLTHQALATPAVQKRVREVGTKPAAFMLQILDFYTKVYEKEHDTYGKVHDPCAVAYVIDPTVMTTERVPVDIELNGALTTGMTVVDFRYPRPKNCRTQVAVKLDFDKFWCLVIDALERIGDPQ.

D10 serves as a coordination point for Ca(2+). D14 contributes to the substrate binding site. Ca(2+)-binding residues include D15 and T126. 3 residues coordinate substrate: N160, E166, and N168. The active-site Proton donor is the H240. D241 lines the Ca(2+) pocket.

The protein belongs to the IUNH family. Homotetramer. It depends on Ca(2+) as a cofactor.

It carries out the reaction inosine + H2O = hypoxanthine + D-ribose. The catalysed reaction is uridine + H2O = D-ribose + uracil. It participates in purine metabolism; purine nucleoside salvage. Its activity is regulated as follows. Is potently inhibited by immucillin A and immucillin ACAP, which are transition state inhibitors. Functionally, catalyzes the hydrolysis of the N-glycosidic bond of all of the commonly occurring purine and pyrimidine nucleosides into ribose and the associated base, but has a preference for inosine and uridine as substrates. Likely functions in purine salvage from the host, a fundamental pathway since protozoan parasites such as L.major are incapable of de novo purine biosynthesis. The protein is Inosine-uridine preferring nucleoside hydrolase (NSNH) of Leishmania major.